Reading from the N-terminus, the 355-residue chain is MFADKLHPFLDRYDEISTLLSDPNIANDIEKMTKLSKEQSSIEPVATAATKYLQILNDIEENKALLEDAELGELAKEELKSLEISREKLEEEIKILLLPKDPNDDKNIFLEIRAGTGGDEAALFAGDLFNAYIRYAELRGYKFEIVSQSEGNTGGFKEIIVLIKGKGAYSRLKFEGGTHRVQRVPETESQGRVHTSAVTVAIMPEVEDSEIEINPNDIRVDVMRSSGHGGQSVNTTDSAVRITHIPTGLVVTNQDGKSQHKNKEAAMKVLKARLYEMQEQERLAKETSERKSQVGTGDRSGRIRTYNYPQNRISDHRINLTLYRLDAIMAAGLFDEIIEPLITHYQAEAMLEAGI.

Q231 is subject to N5-methylglutamine. Over residues 283 to 292 the composition is skewed to basic and acidic residues; it reads LAKETSERKS. The segment at 283 to 306 is disordered; sequence LAKETSERKSQVGTGDRSGRIRTY.

This sequence belongs to the prokaryotic/mitochondrial release factor family. In terms of processing, methylated by PrmC. Methylation increases the termination efficiency of RF1.

The protein resides in the cytoplasm. Peptide chain release factor 1 directs the termination of translation in response to the peptide chain termination codons UAG and UAA. This chain is Peptide chain release factor 1, found in Campylobacter concisus (strain 13826).